The chain runs to 453 residues: DNA repair protein RadA (453 aa).

Residues 10–27 (CQECGYQSPKYLGRCPNC) form a C4-type zinc finger. 95–102 (GDPGIGKS) contacts ATP. The short motif at 251–255 (KNRFG) is the RadA KNRFG motif element. Positions 350–453 (DAYLKSAGGV…VGQVLKAVFS (104 aa)) are lon-protease-like.

Belongs to the RecA family. RadA subfamily.

In terms of biological role, DNA-dependent ATPase involved in processing of recombination intermediates, plays a role in repairing DNA breaks. Stimulates the branch migration of RecA-mediated strand transfer reactions, allowing the 3' invading strand to extend heteroduplex DNA faster. Binds ssDNA in the presence of ADP but not other nucleotides, has ATPase activity that is stimulated by ssDNA and various branched DNA structures, but inhibited by SSB. Does not have RecA's homology-searching function. In Streptococcus pyogenes serotype M3 (strain ATCC BAA-595 / MGAS315), this protein is DNA repair protein RadA.